Consider the following 97-residue polypeptide: Large ribosomal subunit protein eL21 (97 aa).

Residues 1–24 are compositionally biased toward basic residues; sequence MVQKAHSFRRKTRKKLRKHPRRRG. Residues 1-25 are disordered; the sequence is MVQKAHSFRRKTRKKLRKHPRRRGL.

It belongs to the eukaryotic ribosomal protein eL21 family.

The chain is Large ribosomal subunit protein eL21 (rpl21e) from Pyrococcus abyssi (strain GE5 / Orsay).